A 291-amino-acid chain; its full sequence is 29 kDa ribonucleoprotein B, chloroplastic (291 aa).

Residues 87-165 (LKLFVGNLPF…RAIRVNAGPA (79 aa)) enclose the RRM 1 domain. Residues 164–202 (PAPAKRENSSFGGGRGGNSSYGGGRDGNSSFGGARGGRS) are disordered. Residues 166 to 206 (PAKRENSSFGGGRGGNSSYGGGRDGNSSFGGARGGRSVDSS) are linker (Gly-rich). Positions 174 to 189 (FGGGRGGNSSYGGGRD) are enriched in gly residues. The region spanning 207 to 285 (NRVYVGNLSW…RSIRVSAAEE (79 aa)) is the RRM 2 domain.

The protein localises to the plastid. Its subcellular location is the chloroplast. In terms of biological role, could be involved in splicing and/or processing of chloroplast RNA's. The polypeptide is 29 kDa ribonucleoprotein B, chloroplastic (Nicotiana sylvestris (Wood tobacco)).